The following is a 403-amino-acid chain: S-adenosylmethionine synthase (403 aa).

Histidine 16 contacts ATP. Aspartate 18 provides a ligand contact to Mg(2+). Glutamate 44 contributes to the K(+) binding site. 2 residues coordinate L-methionine: glutamate 57 and glutamine 100. The interval 100-110 (QSPDIAQGVDR) is flexible loop. The interval 106–126 (QGVDRSYESRSGSASTDAHDL) is disordered. Residues 176–178 (DGK), 248–249 (KF), aspartate 257, 263–264 (RK), alanine 280, and lysine 284 each bind ATP. Residue aspartate 257 coordinates L-methionine. Lysine 288 serves as a coordination point for L-methionine.

This sequence belongs to the AdoMet synthase family. As to quaternary structure, homotetramer; dimer of dimers. Requires Mg(2+) as cofactor. It depends on K(+) as a cofactor.

It localises to the cytoplasm. The enzyme catalyses L-methionine + ATP + H2O = S-adenosyl-L-methionine + phosphate + diphosphate. Its pathway is amino-acid biosynthesis; S-adenosyl-L-methionine biosynthesis; S-adenosyl-L-methionine from L-methionine: step 1/1. Functionally, catalyzes the formation of S-adenosylmethionine (AdoMet) from methionine and ATP. The overall synthetic reaction is composed of two sequential steps, AdoMet formation and the subsequent tripolyphosphate hydrolysis which occurs prior to release of AdoMet from the enzyme. This is S-adenosylmethionine synthase from Clavibacter michiganensis subsp. michiganensis (strain NCPPB 382).